Consider the following 371-residue polypeptide: N-acetyldiaminopimelate deacetylase (371 aa).

The active site involves aspartate 68. Glutamate 127 acts as the Proton acceptor in catalysis.

Belongs to the peptidase M20A family. N-acetyldiaminopimelate deacetylase subfamily.

It carries out the reaction N-acetyl-(2S,6S)-2,6-diaminopimelate + H2O = (2S,6S)-2,6-diaminopimelate + acetate. It participates in amino-acid biosynthesis; L-lysine biosynthesis via DAP pathway; LL-2,6-diaminopimelate from (S)-tetrahydrodipicolinate (acetylase route): step 3/3. Functionally, catalyzes the conversion of N-acetyl-diaminopimelate to diaminopimelate and acetate. This Listeria monocytogenes serovar 1/2a (strain ATCC BAA-679 / EGD-e) protein is N-acetyldiaminopimelate deacetylase.